The chain runs to 247 residues: Uridylate kinase (247 aa).

An ATP-binding site is contributed by 16–19; sequence KLSG. Glycine 58 contributes to the UMP binding site. Residues glycine 59 and arginine 63 each contribute to the ATP site. Residues aspartate 78 and 139–146 contribute to the UMP site; that span reads TGNPFFTT. 3 residues coordinate ATP: threonine 166, tyrosine 172, and aspartate 175.

This sequence belongs to the UMP kinase family. Homohexamer.

It localises to the cytoplasm. It catalyses the reaction UMP + ATP = UDP + ADP. Its pathway is pyrimidine metabolism; CTP biosynthesis via de novo pathway; UDP from UMP (UMPK route): step 1/1. Its activity is regulated as follows. Inhibited by UTP. Functionally, catalyzes the reversible phosphorylation of UMP to UDP. The protein is Uridylate kinase of Xylella fastidiosa (strain Temecula1 / ATCC 700964).